Reading from the N-terminus, the 71-residue chain is Beta-defensin 131A (71 aa).

The N-terminal stretch at 1–22 is a signal peptide; sequence MRVLFFVFGVLSLMFTVPPARS. 3 disulfide bridges follow: Cys29–Cys57, Cys37–Cys51, and Cys41–Cys58.

Belongs to the beta-defensin family.

It localises to the secreted. Has antibacterial activity. Upon stimulation with lipoteichoic acid, promotes cytokines and chemokines production and secretion. The chain is Beta-defensin 131A from Pan troglodytes (Chimpanzee).